Reading from the N-terminus, the 492-residue chain is Probable beta-1,4-xylosyltransferase IRX14H (492 aa).

Topologically, residues M1–P33 are cytoplasmic. A helical; Signal-anchor for type II membrane protein transmembrane segment spans residues S34–F54. Residues R55–S492 are Lumenal-facing. N-linked (GlcNAc...) asparagine glycosylation is found at N99, N196, and N314. Residues I457–S492 form a disordered region. Residues S473 to D484 are compositionally biased toward basic and acidic residues.

This sequence belongs to the glycosyltransferase 43 family. Expressed in developing interfascicular fibers and xylem cells in stems and developing secondary xylem in roots.

The protein localises to the golgi apparatus membrane. In terms of biological role, involved in the synthesis of the hemicellulose glucuronoxylan, a major component of secondary cell walls. Probably involved in the elongation of glucuronoxylan xylosyl backbone. The polypeptide is Probable beta-1,4-xylosyltransferase IRX14H (IRX14H) (Arabidopsis thaliana (Mouse-ear cress)).